The following is a 165-amino-acid chain: MKKIAIYPGTFDPITYGHLDVITRATKIFDNIIIAISNNVHKKTIFNLKERIKLTKLATFHLKNIKKVIGFNGLLANLAKREKSNILIRGVRTIFDFDYEIKLAAINKQIYPDLDSIFFLSSKEVSFISSSFVKEIAKYQGNIKPYLPKEIHFALIKKFKDIPQK.

Thr10 provides a ligand contact to substrate. ATP-binding positions include 10–11 (TF) and His18. Residues Lys42, Leu75, and Arg89 each contribute to the substrate site. Residues 90-92 (GVR), Glu100, and 125-131 (VSFISSS) each bind ATP.

It belongs to the bacterial CoaD family. As to quaternary structure, homohexamer. Requires Mg(2+) as cofactor.

Its subcellular location is the cytoplasm. The catalysed reaction is (R)-4'-phosphopantetheine + ATP + H(+) = 3'-dephospho-CoA + diphosphate. Its pathway is cofactor biosynthesis; coenzyme A biosynthesis; CoA from (R)-pantothenate: step 4/5. Reversibly transfers an adenylyl group from ATP to 4'-phosphopantetheine, yielding dephospho-CoA (dPCoA) and pyrophosphate. This chain is Phosphopantetheine adenylyltransferase, found in Buchnera aphidicola subsp. Schizaphis graminum (strain Sg).